The sequence spans 213 residues: mRNA-decapping protein OPG121 (213 aa).

Residues glutamate 16 and arginine 50 each contribute to the N(7)-methyl-GTP site. A Nudix hydrolase domain is found at 30–209 (KDTHVFAACI…EYLSYIYNIL (180 aa)). Residues 111 to 132 (GKLDKKESIKDCLRRELKEESD) carry the Nudix box motif. Mg(2+) is bound by residues glutamate 126 and glutamate 130. N(7)-methyl-GTP is bound at residue aspartate 151. Glutamate 183 contacts Mg(2+).

The protein belongs to the Nudix hydrolase family. Interacts with the late transcription elongation factor VLTF-4/OPG110. Interacts with the late transcription factors VLTF-1. Mg(2+) is required as a cofactor. The cofactor is Mn(2+).

The enzyme catalyses a 5'-end (N(7)-methyl 5'-triphosphoguanosine)-guanosine in mRNA + H2O = a 5'-end phospho-guanosine in mRNA + N(7)-methyl-GDP + 2 H(+). Acts with RNA polymerase to initiate transcription from late gene promoters. In Cynomys gunnisoni (Gunnison's prairie dog), this protein is mRNA-decapping protein OPG121 (OPG121).